The following is a 306-amino-acid chain: tRNA pseudouridine synthase B (306 aa).

Residue Asp51 is the Nucleophile of the active site.

It belongs to the pseudouridine synthase TruB family. Type 1 subfamily.

The catalysed reaction is uridine(55) in tRNA = pseudouridine(55) in tRNA. In terms of biological role, responsible for synthesis of pseudouridine from uracil-55 in the psi GC loop of transfer RNAs. This Nocardia farcinica (strain IFM 10152) protein is tRNA pseudouridine synthase B.